A 603-amino-acid chain; its full sequence is Methylenetetrahydrofolate reductase 1 (603 aa).

Glu21 acts as the Proton donor/acceptor in catalysis. NAD(+) contacts are provided by residues 21 to 26 and 53 to 54; these read EFFPPK and TW. FAD is bound by residues 53 to 54, His82, 112 to 114, 130 to 131, Tyr153, and Lys173; these read TW, RGD, and YA. Position 114 (Asp114) interacts with substrate. Substrate-binding residues include Gln184 and Tyr276. Ser355 carries the phosphoserine modification.

The protein belongs to the methylenetetrahydrofolate reductase family. FAD serves as cofactor.

The catalysed reaction is (6S)-5-methyl-5,6,7,8-tetrahydrofolate + NADP(+) = (6R)-5,10-methylene-5,6,7,8-tetrahydrofolate + NADPH + H(+). It carries out the reaction (6S)-5-methyl-5,6,7,8-tetrahydrofolate + NAD(+) = (6R)-5,10-methylene-5,6,7,8-tetrahydrofolate + NADH + H(+). Its pathway is one-carbon metabolism; tetrahydrofolate interconversion. Its function is as follows. Major methylenetetrahydrofolate reductase required to generate the methyl groups necessary for methionine synthetase to convert homocysteine to methionine. Performs 80 to 85 percent of the total methylenetetrahydrofolate reductase activity of the cells. The sequence is that of Methylenetetrahydrofolate reductase 1 (met9) from Schizosaccharomyces pombe (strain 972 / ATCC 24843) (Fission yeast).